A 427-amino-acid chain; its full sequence is Endothelin-1 receptor (427 aa).

The first 20 residues, 1–20 (MSIFCLAAYFWLTMVGGVMA), serve as a signal peptide directing secretion. Residues 21–80 (DNPERYSANLSSHMEDFTPFPGTEINFLGTTHRPPNLALPSNGSMHGYCPQQTKITTAFK) lie on the Extracellular side of the membrane. 2 N-linked (GlcNAc...) asparagine glycosylation sites follow: asparagine 29 and asparagine 62. The chain crosses the membrane as a helical span at residues 81–102 (YINTVISCTIFIVGMVGNATLL). Over 103 to 112 (RIIYQNKCMR) the chain is Cytoplasmic. The helical transmembrane segment at 113-132 (NGPNALIASLALGDLIYVVI) threads the bilayer. Residues 133–159 (DLPINVFKLLAGRWPFDHNDFGVFLCK) are Extracellular-facing. Cysteine 158 and cysteine 239 form a disulfide bridge. The chain crosses the membrane as a helical span at residues 160-181 (LFPFLQKSSVGITVLNLCALSV). The Cytoplasmic portion of the chain corresponds to 182–205 (DRYRAVASWSRVQGIGIPLITAIE). Residues 206–229 (IVSIWILSFILAIPEAIGFVMVPF) traverse the membrane as a helical segment. Topologically, residues 230 to 256 (EYKGELHRTCMLNATSKFMEFYQDVKD) are extracellular. A glycan (N-linked (GlcNAc...) asparagine) is linked at asparagine 242. Residues 257 to 278 (WWLFGFYFCMPLVCTAIFYTLM) form a helical membrane-spanning segment. Residues 279-306 (TCEMLNRRNGSLRIALSEHLKQRREVAK) lie on the Cytoplasmic side of the membrane. The helical transmembrane segment at 307–328 (TVFCLVVIFALCWFPLHLSRIL) threads the bilayer. The Extracellular portion of the chain corresponds to 329–347 (KKTVYDEMDKNRCELLSFL). Residues 348-372 (LLMDYIGINLATMNSCINPIALYFV) form a helical membrane-spanning segment. The Cytoplasmic segment spans residues 373–427 (SKKFKNCFQSCLCCCCHQSKSLMTSVPMNGTSIQWKNQEQNNHNTERSSHKDSMN). A disordered region spans residues 408–427 (KNQEQNNHNTERSSHKDSMN). The segment covering 416-427 (NTERSSHKDSMN) has biased composition (basic and acidic residues). Serine 425 carries the phosphoserine modification.

It belongs to the G-protein coupled receptor 1 family. Endothelin receptor subfamily. EDNRA sub-subfamily. In terms of assembly, interacts with HDAC7 and KAT5.

Its subcellular location is the cell membrane. Its function is as follows. Receptor for endothelin-1. Mediates its action by association with G proteins that activate a phosphatidylinositol-calcium second messenger system. The rank order of binding affinities for ET-A is: ET1 &gt; ET2 &gt;&gt; ET3. The sequence is that of Endothelin-1 receptor from Mus musculus (Mouse).